A 262-amino-acid chain; its full sequence is Phosphatidylglycerol--prolipoprotein diacylglyceryl transferase (262 aa).

Transmembrane regions (helical) follow at residues 17–37 (LAIH…YALG), 57–77 (LIFY…VLFY), 95–115 (GGMS…LFAH), and 119–139 (LGFF…LAAG). Arginine 140 lines the a 1,2-diacyl-sn-glycero-3-phospho-(1'-sn-glycerol) pocket. 3 consecutive transmembrane segments (helical) span residues 173-193 (PSQL…LWWY), 200-220 (AGQV…LVEF), and 227-247 (FLGL…PMVL).

Belongs to the Lgt family.

It is found in the cell inner membrane. It carries out the reaction L-cysteinyl-[prolipoprotein] + a 1,2-diacyl-sn-glycero-3-phospho-(1'-sn-glycerol) = an S-1,2-diacyl-sn-glyceryl-L-cysteinyl-[prolipoprotein] + sn-glycerol 1-phosphate + H(+). Its pathway is protein modification; lipoprotein biosynthesis (diacylglyceryl transfer). Catalyzes the transfer of the diacylglyceryl group from phosphatidylglycerol to the sulfhydryl group of the N-terminal cysteine of a prolipoprotein, the first step in the formation of mature lipoproteins. This is Phosphatidylglycerol--prolipoprotein diacylglyceryl transferase from Bordetella bronchiseptica (strain ATCC BAA-588 / NCTC 13252 / RB50) (Alcaligenes bronchisepticus).